A 65-amino-acid chain; its full sequence is DNA-directed RNA polymerase subunit Rpo10 (65 aa).

Zn(2+) contacts are provided by cysteine 7, cysteine 10, cysteine 44, and cysteine 45.

The protein belongs to the archaeal Rpo10/eukaryotic RPB10 RNA polymerase subunit family. In terms of assembly, part of the RNA polymerase complex. Zn(2+) is required as a cofactor.

It localises to the cytoplasm. It catalyses the reaction RNA(n) + a ribonucleoside 5'-triphosphate = RNA(n+1) + diphosphate. DNA-dependent RNA polymerase (RNAP) catalyzes the transcription of DNA into RNA using the four ribonucleoside triphosphates as substrates. The sequence is that of DNA-directed RNA polymerase subunit Rpo10 from Pyrococcus furiosus (strain ATCC 43587 / DSM 3638 / JCM 8422 / Vc1).